The following is a 378-amino-acid chain: Succinyl-diaminopimelate desuccinylase (378 aa).

His-68 serves as a coordination point for Zn(2+). The active site involves Asp-70. Asp-101 contacts Zn(2+). Catalysis depends on Glu-135, which acts as the Proton acceptor. Residues Glu-136, Glu-164, and His-350 each coordinate Zn(2+).

It belongs to the peptidase M20A family. DapE subfamily. As to quaternary structure, homodimer. Zn(2+) is required as a cofactor. Requires Co(2+) as cofactor.

The catalysed reaction is N-succinyl-(2S,6S)-2,6-diaminopimelate + H2O = (2S,6S)-2,6-diaminopimelate + succinate. Its pathway is amino-acid biosynthesis; L-lysine biosynthesis via DAP pathway; LL-2,6-diaminopimelate from (S)-tetrahydrodipicolinate (succinylase route): step 3/3. Functionally, catalyzes the hydrolysis of N-succinyl-L,L-diaminopimelic acid (SDAP), forming succinate and LL-2,6-diaminopimelate (DAP), an intermediate involved in the bacterial biosynthesis of lysine and meso-diaminopimelic acid, an essential component of bacterial cell walls. In Vibrio atlanticus (strain LGP32) (Vibrio splendidus (strain Mel32)), this protein is Succinyl-diaminopimelate desuccinylase.